Consider the following 1288-residue polypeptide: 5-oxoprolinase (1288 aa).

Residues 1248 to 1270 are disordered; the sequence is PGGGGYGDPEDPAPPPGSPPLFP. Residues 1259–1270 are compositionally biased toward pro residues; it reads PAPPPGSPPLFP. Ser1265 is subject to Phosphoserine.

The protein belongs to the oxoprolinase family. Homodimer. Expressed in testis, kidney and liver.

The protein resides in the cytoplasm. The protein localises to the cytosol. It catalyses the reaction 5-oxo-L-proline + ATP + 2 H2O = L-glutamate + ADP + phosphate + H(+). Its function is as follows. Catalyzes the cleavage of 5-oxo-L-proline to form L-glutamate coupled to the hydrolysis of ATP to ADP and inorganic phosphate. The protein is 5-oxoprolinase (Oplah) of Rattus norvegicus (Rat).